The primary structure comprises 380 residues: Cytochrome b (380 aa).

The next 4 membrane-spanning stretches (helical) occupy residues 33–53 (FGSLLGLCLIAQILTGLFLAM), 77–98 (WLIRNFHANGASFFFICLYLHV), 113–133 (WNIGVVLLLLVMMTAFVGYVL), and 178–198 (FFAFHFLFPFIIAAMVILHLL). Positions 83 and 97 each coordinate heme b. 2 residues coordinate heme b: histidine 182 and histidine 196. Histidine 201 contacts a ubiquinone. 4 helical membrane passes run 226-246 (YKDLFGFVILLLALSVLALFS), 288-308 (LGGVLALLASILILMVVPLLH), 320-340 (LTQILFWTLVADVAILTWIGG), and 347-367 (FITVGQVASVLYFALFLIFIP).

This sequence belongs to the cytochrome b family. As to quaternary structure, the cytochrome bc1 complex contains 3 respiratory subunits (MT-CYB, CYC1 and UQCRFS1), 2 core proteins (UQCRC1 and UQCRC2) and probably 6 low-molecular weight proteins. Requires heme b as cofactor.

The protein localises to the mitochondrion inner membrane. Component of the ubiquinol-cytochrome c reductase complex (complex III or cytochrome b-c1 complex) that is part of the mitochondrial respiratory chain. The b-c1 complex mediates electron transfer from ubiquinol to cytochrome c. Contributes to the generation of a proton gradient across the mitochondrial membrane that is then used for ATP synthesis. The protein is Cytochrome b (mt-cyb) of Neocyttus rhomboidalis (Spiky oreo dory).